Consider the following 684-residue polypeptide: Probable pectin methyltransferase QUA2 (684 aa).

The interval 1-35 is disordered; it reads MSMPLQRGISGVRVSDSSDDLRDSQMKDKTERARS. Over 1-86 the chain is Cytoplasmic; the sequence is MSMPLQRGIS…RHRLMLLFLK (86 aa). Residues 19–35 show a composition bias toward basic and acidic residues; it reads DDLRDSQMKDKTERARS. A helical; Signal-anchor for type II membrane protein membrane pass occupies residues 87–107; sequence ISLVLIVVIALAGSFWWTISI. Topologically, residues 108–684 are lumenal; it reads STSSRGHVYH…QKPFTKRQSI (577 aa). N-linked (GlcNAc...) asparagine glycans are attached at residues Asn161 and Asn476.

This sequence belongs to the methyltransferase superfamily. In terms of tissue distribution, ubiquitous.

It is found in the golgi apparatus membrane. Its pathway is glycan metabolism; pectin biosynthesis. May be involved in the synthesis of homogalacturonan. Required for normal cell adhesion and plant development. In Arabidopsis thaliana (Mouse-ear cress), this protein is Probable pectin methyltransferase QUA2 (QUA2).